A 424-amino-acid chain; its full sequence is Glutathione reductase (424 aa).

Lys8 lines the FAD pocket. Tyr56 contacts glutathione. Ala72 provides a ligand contact to FAD. Ala137, Ile140, Glu143, Arg160, Arg166, and Gly236 together coordinate NADP(+). Position 277 (Asp277) interacts with FAD. Leu283 is an NADP(+) binding site. Thr285 serves as a coordination point for FAD. Arg293 contributes to the glutathione binding site. Val316 provides a ligand contact to NADP(+). His413 lines the FAD pocket. His413 acts as the Proton acceptor in catalysis.

This sequence belongs to the class-I pyridine nucleotide-disulfide oxidoreductase family. As to quaternary structure, homodimer; disulfide-linked. FAD serves as cofactor.

It is found in the mitochondrion. It localises to the cytoplasm. The catalysed reaction is 2 glutathione + NADP(+) = glutathione disulfide + NADPH + H(+). Catalyzes the reduction of glutathione disulfide (GSSG) to reduced glutathione (GSH). Constitutes the major mechanism to maintain a high GSH:GSSG ratio in the cytosol. The protein is Glutathione reductase (Gsr) of Rattus norvegicus (Rat).